The sequence spans 155 residues: SsrA-binding protein (155 aa).

The segment covering 135–147 (TIKRRDQERDIKK) has biased composition (basic and acidic residues). Residues 135-155 (TIKRRDQERDIKKQMKHYNAR) are disordered.

This sequence belongs to the SmpB family.

Its subcellular location is the cytoplasm. In terms of biological role, required for rescue of stalled ribosomes mediated by trans-translation. Binds to transfer-messenger RNA (tmRNA), required for stable association of tmRNA with ribosomes. tmRNA and SmpB together mimic tRNA shape, replacing the anticodon stem-loop with SmpB. tmRNA is encoded by the ssrA gene; the 2 termini fold to resemble tRNA(Ala) and it encodes a 'tag peptide', a short internal open reading frame. During trans-translation Ala-aminoacylated tmRNA acts like a tRNA, entering the A-site of stalled ribosomes, displacing the stalled mRNA. The ribosome then switches to translate the ORF on the tmRNA; the nascent peptide is terminated with the 'tag peptide' encoded by the tmRNA and targeted for degradation. The ribosome is freed to recommence translation, which seems to be the essential function of trans-translation. This Streptococcus pyogenes serotype M3 (strain SSI-1) protein is SsrA-binding protein.